A 428-amino-acid chain; its full sequence is UPF0229 protein YeaH (428 aa).

Over residues 78–90 the composition is skewed to basic and acidic residues; it reads GNDHFIQNDRIER. The disordered stretch occupies residues 78–111; sequence GNDHFIQNDRIERPQGGGGGGSGSGQGQASQDGE. Over residues 92–103 the composition is skewed to gly residues; sequence QGGGGGGSGSGQ.

Belongs to the UPF0229 family.

The sequence is that of UPF0229 protein YeaH from Salmonella paratyphi C (strain RKS4594).